The primary structure comprises 488 residues: Aerolysin (488 aa).

Positions M1–A24 are cleaved as a signal peptide. 2 disulfide bridges follow: C43–C99 and C183–C188. Positions W69–Y85 are interaction with host N-linked glycan. Residues Y256–W288 form a part of the transmembrane beta-barrel after proteolytic activation of the toxin and insertion into the host membrane region. Residues R346–H355 form an interaction with glycans from host GPI-anchor region. The propeptide occupies T444 to Q488.

It belongs to the aerolysin family. Homodimer in solution; homoheptamer in the host membrane. After binding to GPI-anchored proteins in target membranes and proteolytic removal of the C-terminal propeptide, the protein assembles into a heptameric pre-pore complex. A further conformation change leads to insertion into the host membrane. Proteolytic cleavage and subsequent release of the propeptide trigger a major conformation change, leading to the formation of a heptameric pre-pore that then inserts into the host membrane.

The protein resides in the secreted. Its subcellular location is the host cell membrane. Functionally, secreted, cytolytic toxin that forms pores in host membranes after proteolytic removal of a C-terminal propeptide, leading to destruction of the membrane permeability barrier and cell death. The pores are formed by transmembrane beta-strands and are approximately 3 nm in diameter. This Aeromonas sobria protein is Aerolysin (asa1).